A 382-amino-acid chain; its full sequence is Flap endonuclease 1 (382 aa).

Positions M1–R104 are N-domain. D34 provides a ligand contact to Mg(2+). Residues R47 and R70 each contribute to the DNA site. Position 86 (D86) interacts with Mg(2+). The segment at G95–G118 is disordered. Over residues E96 to T115 the composition is skewed to basic and acidic residues. The segment at D122–Y253 is I-domain. E158, E160, D179, and D181 together coordinate Mg(2+). Position 158 (E158) interacts with DNA. DNA-binding residues include G231 and D233. D233 contacts Mg(2+). Positions T336–F344 are interaction with PCNA. The disordered stretch occupies residues T353–K382. Residues N364 to N375 are compositionally biased toward polar residues.

It belongs to the XPG/RAD2 endonuclease family. FEN1 subfamily. Interacts with PCNA. Three molecules of FEN1 bind to one PCNA trimer with each molecule binding to one PCNA monomer. PCNA stimulates the nuclease activity without altering cleavage specificity. Mg(2+) is required as a cofactor. Phosphorylated. Phosphorylation upon DNA damage induces relocalization to the nuclear plasma.

The protein resides in the nucleus. It localises to the nucleolus. Its subcellular location is the nucleoplasm. It is found in the mitochondrion. Functionally, structure-specific nuclease with 5'-flap endonuclease and 5'-3' exonuclease activities involved in DNA replication and repair. During DNA replication, cleaves the 5'-overhanging flap structure that is generated by displacement synthesis when DNA polymerase encounters the 5'-end of a downstream Okazaki fragment. It enters the flap from the 5'-end and then tracks to cleave the flap base, leaving a nick for ligation. Also involved in the long patch base excision repair (LP-BER) pathway, by cleaving within the apurinic/apyrimidinic (AP) site-terminated flap. Acts as a genome stabilization factor that prevents flaps from equilibrating into structures that lead to duplications and deletions. Also possesses 5'-3' exonuclease activity on nicked or gapped double-stranded DNA, and exhibits RNase H activity. Also involved in replication and repair of rDNA and in repairing mitochondrial DNA. This chain is Flap endonuclease 1, found in Glossina morsitans morsitans (Savannah tsetse fly).